The primary structure comprises 807 residues: Zinc finger protein 594 (807 aa).

Residues 1–23 (MKEWKSKMEISEEKKSARAASEK) are disordered. C2H2-type zinc fingers lie at residues 127-149 (YECK…QRIH), 155-177 (YVCN…QRIH), 183-205 (YICH…KQIH), 211-233 (YECK…QRIH), 239-261 (YLCN…HRIH), 267-289 (YECY…QRIH), 295-317 (LKCN…QRLH), and 323-345 (YECH…QRLH). The C2H2-type 9; degenerate zinc finger occupies 348–370 (EKIEECEKTFSKDEELREEQRIH). 6 C2H2-type zinc fingers span residues 376–398 (YWCN…QVTH), 404–426 (YECK…HRIH), 432–454 (CVCS…HRVH), 460–482 (YECS…QKIH), 488–510 (YQCT…RRIH), and 516–538 (YECK…QSLH). The C2H2-type 16; degenerate zinc-finger motif lies at 543 to 562 (LECEKTFSQDEELRGEQKIH). 6 C2H2-type zinc fingers span residues 568–590 (YWCN…QVTH), 596–618 (YECK…HRIH), 624–646 (YVCN…HRIH), 652–674 (YECS…QKIH), 680–702 (YQCS…RRLH), and 708–730 (YECK…QRLH). The C2H2-type 23; degenerate zinc-finger motif lies at 733-755 (EKLEECEKTFSKDEELRKEQRTH). The C2H2-type 24 zinc finger occupies 761 to 783 (YWCNQCSRTFQGSSDLIRHQVTH).

The protein belongs to the krueppel C2H2-type zinc-finger protein family.

Its subcellular location is the nucleus. Its function is as follows. May be involved in transcriptional regulation. The chain is Zinc finger protein 594 (ZNF594) from Homo sapiens (Human).